Reading from the N-terminus, the 391-residue chain is Phosphoglycerate kinase (391 aa).

Residues 21 to 23 (DLN), Arg36, 59 to 62 (HLGR), Arg113, and Arg146 each bind substrate. ATP-binding positions include Lys197, Glu319, and 345 to 348 (GGDT).

Belongs to the phosphoglycerate kinase family. Monomer.

It is found in the cytoplasm. The enzyme catalyses (2R)-3-phosphoglycerate + ATP = (2R)-3-phospho-glyceroyl phosphate + ADP. It functions in the pathway carbohydrate degradation; glycolysis; pyruvate from D-glyceraldehyde 3-phosphate: step 2/5. This chain is Phosphoglycerate kinase, found in Shewanella sp. (strain MR-4).